The sequence spans 545 residues: Toxin BC_0920 (545 aa).

The 217-residue stretch at 1-217 (MSLNMYLGEV…ARQAANSIEE (217 aa)) folds into the LXG domain.

The protein in the N-terminal section; belongs to the LXG family. This sequence in the C-terminal section; belongs to the bacterial EndoU family. Probably interacts with cognate immunity protein BC_0921. The interaction inhibits the toxic activity of BC_0921.

Its subcellular location is the secreted. Functionally, toxic component of an LXG toxin-immunity module. The C-terminus (residues 322-545) has RNase activity in E.coli which is neutralized by cognate immunity protein BC_0921, but not by immunity proteins specific to other toxins with the LXG domain. Degrades 5S rRNA and several tRNAs in vitro; cleavage is endonucleolytic within the anticodon loop for tRNA(GAU-Ile) and tRNA(UUC-Glu) but total for 5S rRNA and at least one other tRNA. RNase activity is suppressed by cognate immunity protein BC_0921. This is Toxin BC_0920 from Bacillus cereus (strain ATCC 14579 / DSM 31 / CCUG 7414 / JCM 2152 / NBRC 15305 / NCIMB 9373 / NCTC 2599 / NRRL B-3711).